The sequence spans 228 residues: Death domain-containing membrane protein NRADD (228 aa).

Over 1 to 52 the chain is Extracellular; that stretch reads MLYNVSKGVVYSDTALQGQDGDREGMWVGAGGALAPNTSSLFPPEPPGASSN. Residues N4 and N37 are each glycosylated (N-linked (GlcNAc...) asparagine). Residues 53-73 form a helical; Signal-anchor for type III membrane protein membrane-spanning segment; sequence IIPVYCALLATVILGLLAYVA. The Cytoplasmic segment spans residues 74-228; that stretch reads FKCWRSHKQR…SSPAESSSVV (155 aa). The tract at residues 87-122 is disordered; sequence AKARTVELGDPDRDQRRGDSNVFVDSPPSLEPCIPS. Basic and acidic residues predominate over residues 90–105; the sequence is RTVELGDPDRDQRRGD. The Death domain occupies 143–222; it reads EEVQRLLMMG…DVVQVLSSPA (80 aa).

In terms of assembly, interacts with NGFR. Interacts with NTRK1. Interacts with SORT1. Detected in lung and testis.

It localises to the cell membrane. The protein resides in the nucleus. Its function is as follows. Modulates NTRK1 signaling. Can activate several intracellular signaling pathways, leading to activation of JUN. Promotes apoptosis. Promotes translocation of SORT1 to the cell membrane, and thereby hinders lysosomal degradation of SOTR1 and promotes its interaction with NGFR. This is Death domain-containing membrane protein NRADD (Nradd) from Mus musculus (Mouse).